We begin with the raw amino-acid sequence, 589 residues long: (E)-beta-ocimene synthase, chloroplastic (589 aa).

The N-terminal 25 residues, 1 to 25 (MAAHNLCFNSAFVCNVHHQKTQHFP), are a transit peptide targeting the chloroplast. Residues Arg-302, Asp-339, Asp-343, Arg-480, and Asn-483 each coordinate (2E,6E)-farnesyl diphosphate. Mg(2+)-binding residues include Asp-339 and Asp-343. The short motif at 339–343 (DDIYD) is the DDXXD motif element. Residues Asn-483, Thr-487, and Glu-491 each contribute to the Mg(2+) site.

This sequence belongs to the terpene synthase family. Tpsb subfamily. Mg(2+) is required as a cofactor. It depends on Mn(2+) as a cofactor. Expressed exclusively in flowers.

It is found in the plastid. The protein resides in the chloroplast. The catalysed reaction is (2E,6E)-farnesyl diphosphate = (3E,6E)-alpha-farnesene + diphosphate. The protein operates within secondary metabolite biosynthesis; terpenoid biosynthesis. Its function is as follows. Predominantly involved in monoterpene (C10) biosynthesis. Using GPP as substrate, the major product is (E)-beta-ocimene with minor amounts of (Z)-beta-ocimene and myrcene. Using FPP as substrate, could also be able to synthesize in vitro sesquiterpenes (C15) with (E,E)-alpha-farnesene as the major product and with (Z,E)-alpha-farnesene and (E,E)-beta-farnesene as minor products. The polypeptide is (E)-beta-ocimene synthase, chloroplastic (TPS02) (Arabidopsis thaliana (Mouse-ear cress)).